We begin with the raw amino-acid sequence, 409 residues long: Lissencephaly-1 homolog (409 aa).

In terms of domain architecture, LisH spans 7–39; sequence RRERSNQAIADYLGSNGYTDALEAFRKEADMPN. Residues 54–81 are a coiled coil; the sequence is TSVIRLQKKVMELEAKLSEAEKEAIEGA. WD repeat units follow at residues 104–145, 146–185, 189–228, 231–270, 273–332, 335–374, and 377–409; these read GHRA…RTLK, GHTD…ECVK, GHDH…CVKT, GHRE…CKAE, EHEN…CLFT, GHDN…CMKT, and AHSH…WECR.

Belongs to the WD repeat LIS1/nudF family.

The protein localises to the cytoplasm. It is found in the cytoskeleton. Its subcellular location is the microtubule organizing center. It localises to the centrosome. Its function is as follows. Positively regulates the activity of the minus-end directed microtubule motor protein dynein. May enhance dynein-mediated microtubule sliding by targeting dynein to the microtubule plus end. Required for several dynein- and microtubule-dependent processes. This chain is Lissencephaly-1 homolog, found in Aedes aegypti (Yellowfever mosquito).